A 348-amino-acid polypeptide reads, in one-letter code: MTAPSQVLKIRRPDDWHLHLRDGDMLKTVVPYTSEIYGRAIVMPNLAPPVTTVEAAVAYRQRILDAVPAGHDFTPLMTCYLTDSLDPNELERGFNEGVFTAAKLYPANATTNSSHGVTSVDAIMPVLERMEKIGMPLLVHGEVTHADIDIFDREARFIESVMEPLRQRLTALKVVFEHITTKDAADYVRDGNERLAATITPQHLMFNRNHMLVGGVRPHLYCLPILKRNIHQQALRELVASGFNRVFLGTDSAPHARHRKESSCGCAGCFNAPTALGSYATVFEEMNALQYFEAFCSVNGPQFYGLPVNDTFIELVREEQQVAESIALTDDTLVPFLAGETVRWSVKQ.

Zn(2+) is bound by residues His-17 and His-19. Residues 19–21 (HLR) and Asn-45 contribute to the substrate site. Zn(2+) contacts are provided by Lys-103, His-140, and His-178. Lys-103 is modified (N6-carboxylysine). His-140 contacts substrate. Position 223 (Leu-223) interacts with substrate. Asp-251 serves as a coordination point for Zn(2+). The active site involves Asp-251. Residues His-255 and Ala-267 each coordinate substrate.

Belongs to the metallo-dependent hydrolases superfamily. DHOase family. Class II DHOase subfamily. As to quaternary structure, homodimer. It depends on Zn(2+) as a cofactor.

It catalyses the reaction (S)-dihydroorotate + H2O = N-carbamoyl-L-aspartate + H(+). The protein operates within pyrimidine metabolism; UMP biosynthesis via de novo pathway; (S)-dihydroorotate from bicarbonate: step 3/3. Catalyzes the reversible cyclization of carbamoyl aspartate to dihydroorotate. The chain is Dihydroorotase from Escherichia coli (strain UTI89 / UPEC).